The chain runs to 292 residues: Elongation factor Ts (292 aa).

Positions 82–85 are involved in Mg(2+) ion dislocation from EF-Tu; it reads TDFV.

The protein belongs to the EF-Ts family.

Its subcellular location is the cytoplasm. Associates with the EF-Tu.GDP complex and induces the exchange of GDP to GTP. It remains bound to the aminoacyl-tRNA.EF-Tu.GTP complex up to the GTP hydrolysis stage on the ribosome. In Legionella pneumophila (strain Paris), this protein is Elongation factor Ts.